A 959-amino-acid polypeptide reads, in one-letter code: Probable LRR receptor-like serine/threonine-protein kinase At5g37450 (959 aa).

The first 24 residues, 1–24 (MKEMMGVVGIILVVSSCCLSLLDA), serve as a signal peptide directing secretion. The Extracellular portion of the chain corresponds to 25–565 (QEITHPTDVS…SGMSIGVSVG (541 aa)). Residues asparagine 62, asparagine 88, asparagine 102, and asparagine 123 are each glycosylated (N-linked (GlcNAc...) asparagine). LRR repeat units follow at residues 79-100 (VKEL…LGLL), 101-124 (SNLT…LGNL), 125-148 (THLI…LGSL), 149-172 (SNLL…LANL), 173-198 (KKLK…TLTN), 200-220 (LHFL…LAQM), 221-244 (PSLR…SYGS), 246-268 (PNLV…LSKS), and 269-292 (LVLY…KFSA). Asparagine 182 carries N-linked (GlcNAc...) asparagine glycosylation. N-linked (GlcNAc...) asparagine glycosylation is found at asparagine 293, asparagine 311, asparagine 327, asparagine 358, asparagine 369, and asparagine 510. LRR repeat units lie at residues 294-314 (ITTI…NFSG), 315-338 (LPRL…IWEN), and 341-366 (LKAE…LLNP). The helical transmembrane segment at 566 to 586 (IIIGAIAFFLVLSSLALVFFI) threads the bilayer. Topologically, residues 587-959 (KRSKRKRKTR…SGVIPSIAPR (373 aa)) are cytoplasmic. A Protein kinase domain is found at 631–906 (FSDLSQIGRG…RELENIYGLI (276 aa)). Residues 637 to 645 (IGRGGYGKV) and lysine 659 each bind ATP. Aspartate 755 serves as the catalytic Proton acceptor.

The protein belongs to the protein kinase superfamily. Ser/Thr protein kinase family.

The protein resides in the membrane. It catalyses the reaction L-seryl-[protein] + ATP = O-phospho-L-seryl-[protein] + ADP + H(+). The enzyme catalyses L-threonyl-[protein] + ATP = O-phospho-L-threonyl-[protein] + ADP + H(+). This is Probable LRR receptor-like serine/threonine-protein kinase At5g37450 from Arabidopsis thaliana (Mouse-ear cress).